The following is a 151-amino-acid chain: Large ribosomal subunit protein uL13 (151 aa).

It belongs to the universal ribosomal protein uL13 family. In terms of assembly, part of the 50S ribosomal subunit.

Its function is as follows. This protein is one of the early assembly proteins of the 50S ribosomal subunit, although it is not seen to bind rRNA by itself. It is important during the early stages of 50S assembly. In Synechocystis sp. (strain ATCC 27184 / PCC 6803 / Kazusa), this protein is Large ribosomal subunit protein uL13.